A 514-amino-acid chain; its full sequence is Na(+)/H(+) antiporter NhaB (514 aa).

Helical transmembrane passes span 23–43 (LALL…PFIA), 52–72 (IFTL…LLAI), 97–117 (LLLM…LFIF), 120–140 (LLLS…AAAF), 144–164 (FLDA…FYGI), 202–222 (LMMH…VGEP), 238–258 (FFLR…LTCL), 303–323 (ALIG…VGLI), 353–373 (FTAL…QSLF), 391–411 (LFYL…VGTI), 447–467 (ATPN…APLI), and 475–495 (VWMA…CVEF).

Belongs to the NhaB Na(+)/H(+) (TC 2.A.34) antiporter family.

It localises to the cell inner membrane. It catalyses the reaction 2 Na(+)(in) + 3 H(+)(out) = 2 Na(+)(out) + 3 H(+)(in). Functionally, na(+)/H(+) antiporter that extrudes sodium in exchange for external protons. The sequence is that of Na(+)/H(+) antiporter NhaB from Escherichia fergusonii (strain ATCC 35469 / DSM 13698 / CCUG 18766 / IAM 14443 / JCM 21226 / LMG 7866 / NBRC 102419 / NCTC 12128 / CDC 0568-73).